The chain runs to 106 residues: Ribulose bisphosphate carboxylase small subunit (106 aa).

Belongs to the RuBisCO small chain family. As to quaternary structure, heterohexadecamer of 8 large and 8 small subunits.

The protein resides in the plastid. The protein localises to the cyanelle. Functionally, ruBisCO catalyzes two reactions: the carboxylation of D-ribulose 1,5-bisphosphate, the primary event in carbon dioxide fixation, as well as the oxidative fragmentation of the pentose substrate. Both reactions occur simultaneously and in competition at the same active site. Although the small subunit is not catalytic it is essential for maximal activity. This is Ribulose bisphosphate carboxylase small subunit from Cyanophora paradoxa.